The sequence spans 22 residues: 2.39 kDa venom peptide (22 aa).

Contains 2 disulfide bonds. Expressed by the venom gland.

It localises to the secreted. Its function is as follows. Not lethal to mice by intraperitoneal or intracerebroventricular injections in doses up to 100 micrograms. The protein is 2.39 kDa venom peptide of Heterometrus spinifer (Asia giant forest scorpion).